Consider the following 118-residue polypeptide: MARIAGINIPDQKHTVIALTAIFGIGRTRARAICASTAIAETAKIKELSEAQIDILREEVAKYSVEGDLRREISMNIKRLMDLGCYRGLRHRRSLPLRGQRTKTNARTRKGPRKPIRK.

The tract at residues 94 to 118 (SLPLRGQRTKTNARTRKGPRKPIRK) is disordered.

Belongs to the universal ribosomal protein uS13 family. As to quaternary structure, part of the 30S ribosomal subunit. Forms a loose heterodimer with protein S19. Forms two bridges to the 50S subunit in the 70S ribosome.

Located at the top of the head of the 30S subunit, it contacts several helices of the 16S rRNA. In the 70S ribosome it contacts the 23S rRNA (bridge B1a) and protein L5 of the 50S subunit (bridge B1b), connecting the 2 subunits; these bridges are implicated in subunit movement. Contacts the tRNAs in the A and P-sites. The chain is Small ribosomal subunit protein uS13 from Shewanella denitrificans (strain OS217 / ATCC BAA-1090 / DSM 15013).